The primary structure comprises 535 residues: Aklavinone 12-hydroxylase RdmE (535 aa).

Positions 15, 16, 35, 119, and 143 each coordinate FAD. The active-site Proton acceptor is the Tyr-224. An FAD-binding site is contributed by Asp-308. Gly-317 contributes to the aklavinone binding site.

It belongs to the PheA/TfdB FAD monooxygenase family. In terms of assembly, monomer. It depends on FAD as a cofactor.

It carries out the reaction aklavinone + NADPH + O2 + H(+) = epsilon-rhodomycinone + NADP(+) + H2O. Its pathway is antibiotic biosynthesis; daunorubicin biosynthesis. The protein operates within antibiotic biosynthesis; carminomycin biosynthesis. It participates in antibiotic biosynthesis; rhodomycin biosynthesis. Inhibited by phenylglyoxal and 2,3-butanedione. NADP provides a partial protection against inhibition by phenylglyoxal. Increasing the methanol concentration in the assay causes inhibition of the enzyme. Functionally, involved in the biosynthesis of the anthracyclines carminomycin, rhodomycin and daunorubicin (daunomycin) which are aromatic polyketide antibiotics that exhibit high cytotoxicity and are widely applied in the chemotherapy of a variety of cancers. Catalyzes the incorporation of a hydroxyl group at position C-11 of aklavinone, resulting in epsilon-rhodomycinone. It cannot accept substrates glycosylated at position C-7 and is specific for the C-9R configuration of anthracyclines. It can use both NAD or NADP but it is slowly inactivated in the presence of NADH. The sequence is that of Aklavinone 12-hydroxylase RdmE (rdmE) from Streptomyces purpurascens.